Consider the following 270-residue polypeptide: Glucosamine-6-phosphate deaminase (270 aa).

D72 acts as the Proton acceptor; for enolization step in catalysis. D141 functions as the For ring-opening step in the catalytic mechanism. The active-site Proton acceptor; for ring-opening step is the H143. E148 (for ring-opening step) is an active-site residue.

This sequence belongs to the glucosamine/galactosamine-6-phosphate isomerase family. NagB subfamily. As to quaternary structure, homohexamer.

It carries out the reaction alpha-D-glucosamine 6-phosphate + H2O = beta-D-fructose 6-phosphate + NH4(+). The protein operates within amino-sugar metabolism; N-acetylneuraminate degradation; D-fructose 6-phosphate from N-acetylneuraminate: step 5/5. Allosterically activated by N-acetylglucosamine 6-phosphate (GlcNAc6P). Catalyzes the reversible isomerization-deamination of glucosamine 6-phosphate (GlcN6P) to form fructose 6-phosphate (Fru6P) and ammonium ion. This is Glucosamine-6-phosphate deaminase from Photorhabdus laumondii subsp. laumondii (strain DSM 15139 / CIP 105565 / TT01) (Photorhabdus luminescens subsp. laumondii).